The following is a 236-amino-acid chain: Cytochrome b-c1 complex subunit Rieske-4, mitochondrial (236 aa).

A mitochondrion-targeting transit peptide spans 1–24 (MINFGSCWGLASVTSNSFSIISGF). Over 25–73 (SSNSVSHAHDMGLVPDLPPTVAAIKNPTSKIVYDEHNHERYPPGDPSKR) the chain is Mitochondrial matrix. Residues 74 to 96 (AFAYFVLTGGRFVYASLVRLLIL) form a helical membrane-spanning segment. Residues 97–236 (KFVLSMSASK…FLEENKLLIG (140 aa)) are Mitochondrial intermembrane-facing. The Rieske domain occupies 146 to 234 (INLANSVDLG…YSFLEENKLL (89 aa)). [2Fe-2S] cluster is bound by residues Cys179, His181, Cys198, and His201. A disulfide bridge connects residues Cys184 and Cys200.

Belongs to the Rieske iron-sulfur protein family. Component of the ubiquinol-cytochrome c oxidoreductase (cytochrome b-c1 complex, complex III, CIII), a multisubunit enzyme composed of 3 respiratory subunits cytochrome b, cytochrome c1 and Rieske protein, 2 core protein subunits, and several low-molecular weight protein subunits. The complex exists as an obligatory dimer and forms supercomplexes (SCs) in the inner mitochondrial membrane with cytochrome c oxidase (complex IV, CIV). [2Fe-2S] cluster is required as a cofactor.

It localises to the mitochondrion inner membrane. The enzyme catalyses a quinol + 2 Fe(III)-[cytochrome c](out) = a quinone + 2 Fe(II)-[cytochrome c](out) + 2 H(+)(out). Component of the ubiquinol-cytochrome c oxidoreductase, a multisubunit transmembrane complex that is part of the mitochondrial electron transport chain which drives oxidative phosphorylation. The respiratory chain contains 3 multisubunit complexes succinate dehydrogenase (complex II, CII), ubiquinol-cytochrome c oxidoreductase (cytochrome b-c1 complex, complex III, CIII) and cytochrome c oxidase (complex IV, CIV), that cooperate to transfer electrons derived from NADH and succinate to molecular oxygen, creating an electrochemical gradient over the inner membrane that drives transmembrane transport and the ATP synthase. The cytochrome b-c1 complex catalyzes electron transfer from ubiquinol to cytochrome c, linking this redox reaction to translocation of protons across the mitochondrial inner membrane, with protons being carried across the membrane as hydrogens on the quinol. In the process called Q cycle, 2 protons are consumed from the matrix, 4 protons are released into the intermembrane space and 2 electrons are passed to cytochrome c. The Rieske protein is a catalytic core subunit containing a [2Fe-2S] iron-sulfur cluster. It cycles between 2 conformational states during catalysis to transfer electrons from the quinol bound in the Q(0) site in cytochrome b to cytochrome c1. This is Cytochrome b-c1 complex subunit Rieske-4, mitochondrial from Nicotiana tabacum (Common tobacco).